Here is a 426-residue protein sequence, read N- to C-terminus: Hemojuvelin (426 aa).

Positions 1-35 (MGEPGQSPSPRSSHGSPPTLSTLTLLLLLCGHAHS) are cleaved as a signal peptide. Phosphotyrosine is present on Tyr-46. Residue Asn-118 is glycosylated (N-linked (GlcNAc...) asparagine). Positions 119-142 (CSRQGPTAPPPPRGPALPGAGSGL) are disordered. 2 cysteine pairs are disulfide-bonded: Cys-148–Cys-230 and Cys-167–Cys-317. N-linked (GlcNAc...) asparagine glycosylation is found at Asn-213 and Asn-372. The GPI-anchor amidated aspartate moiety is linked to residue Asp-400. A propeptide spans 401–426 (AGVPLSSATLLAPLLSGLFVLWLCIQ) (removed in mature form).

The protein belongs to the repulsive guidance molecule (RGM) family. As to quaternary structure, interacts with BMP2 and BMP4. Interacts with BMP6. Interacts with BMPR1B. Interacts with TMPRSS6. In terms of processing, autocatalytically cleaved at low pH; the two chains remain linked via two disulfide bonds. Also proteolytically processed by TMPRSS6, several fragments being released in the extracellular space; regulates HJV activity in BMP signaling and thefore iron homeostasis. As to expression, adult and fetal liver, heart, and skeletal muscle.

It localises to the cell membrane. In terms of biological role, acts as a bone morphogenetic protein (BMP) coreceptor. Through enhancement of BMP signaling regulates hepcidin (HAMP) expression and regulates iron homeostasis. This Homo sapiens (Human) protein is Hemojuvelin.